Reading from the N-terminus, the 441-residue chain is Ribosomal protein uS12 methylthiotransferase RimO (441 aa).

An MTTase N-terminal domain is found at 8 to 118 (PKIGFVSLGC…VLQHVHHYVP (111 aa)). 6 residues coordinate [4Fe-4S] cluster: Cys-17, Cys-53, Cys-82, Cys-150, Cys-154, and Cys-157. The 238-residue stretch at 136–373 (LTPRHYAYLK…MQLQQQISAE (238 aa)) folds into the Radical SAM core domain. The 66-residue stretch at 376–441 (QEKVGREILV…DEYDLWGSRV (66 aa)) folds into the TRAM domain.

It belongs to the methylthiotransferase family. RimO subfamily. [4Fe-4S] cluster serves as cofactor.

The protein resides in the cytoplasm. The catalysed reaction is L-aspartate(89)-[ribosomal protein uS12]-hydrogen + (sulfur carrier)-SH + AH2 + 2 S-adenosyl-L-methionine = 3-methylsulfanyl-L-aspartate(89)-[ribosomal protein uS12]-hydrogen + (sulfur carrier)-H + 5'-deoxyadenosine + L-methionine + A + S-adenosyl-L-homocysteine + 2 H(+). In terms of biological role, catalyzes the methylthiolation of an aspartic acid residue of ribosomal protein uS12. This is Ribosomal protein uS12 methylthiotransferase RimO from Salmonella arizonae (strain ATCC BAA-731 / CDC346-86 / RSK2980).